The chain runs to 294 residues: Nucleotide-binding protein CPF_0343 (294 aa).

Residue 8 to 15 (GLSGAGKT) participates in ATP binding. Residue 59–62 (DIRG) participates in GTP binding.

It belongs to the RapZ-like family.

Functionally, displays ATPase and GTPase activities. The polypeptide is Nucleotide-binding protein CPF_0343 (Clostridium perfringens (strain ATCC 13124 / DSM 756 / JCM 1290 / NCIMB 6125 / NCTC 8237 / Type A)).